We begin with the raw amino-acid sequence, 87 residues long: RNA-binding protein Hfq (87 aa).

One can recognise a Sm domain in the interval 9-68; the sequence is DPFLNALRRERIPVSIYLVNGIKLQGQIESFDQFVILLKNTVNQMVYKHAISTVVPARPV. A disordered region spans residues 65–87; sequence ARPVSHHSGDRPQGDRPQEKSED. Residues 71–87 show a composition bias toward basic and acidic residues; the sequence is HSGDRPQGDRPQEKSED.

Belongs to the Hfq family. In terms of assembly, homohexamer.

Its function is as follows. RNA chaperone that binds small regulatory RNA (sRNAs) and mRNAs to facilitate mRNA translational regulation in response to envelope stress, environmental stress and changes in metabolite concentrations. Also binds with high specificity to tRNAs. This chain is RNA-binding protein Hfq, found in Vibrio parahaemolyticus serotype O3:K6 (strain RIMD 2210633).